Consider the following 326-residue polypeptide: Putative replication protein B (326 aa).

Belongs to the ParB family.

The protein is Putative replication protein B of Sinorhizobium fredii (strain NBRC 101917 / NGR234).